Here is a 575-residue protein sequence, read N- to C-terminus: FAD-dependent monooxygenase rstn6 (575 aa).

A signal peptide spans 1–17 (MYDVIVIGAGWCGLVAA). Position 106 (Ile-106) interacts with FAD. Asn-239 and Asn-295 each carry an N-linked (GlcNAc...) asparagine glycan.

Belongs to the FAD-binding monooxygenase family. Requires FAD as cofactor.

It functions in the pathway antifungal biosynthesis. In terms of biological role, FAD-dependent monooxygenase; part of the gene cluster that mediates the biosynthesis of the tetrahydropyranyl antifungal agent restricticin that acts as an inhibitor of CYP51 and blocks the ergosterol biosynthesis. The highly reducing polyketide synthase rstn3, the short chain dehydrogenase rstn4, the cyclase rstn5, the FAD-dependent monooxygenase rstn6 and the enoylreductase rstn7 are required to generate the first stable intermediate desmethylrestrictinol. Rstn3 with rstn7 biosynthesize the first polyketide chain intermediate that is reduced by rstn4, followed by epoxidation by rstn6 before 6-endo cyclization via epoxide opening by rstn5 leads to desmethylrestrictinol. The methyltransferase rstn1 then catalyzes the C4 O-methylation of desmethylrestrictinol to produce restrictinol, and the nonribosomal peptide synthetase rstn8 catalyzes the C3 esterification of restrictinol with glycine that leads to restricticin. This is FAD-dependent monooxygenase rstn6 from Aspergillus nomiae NRRL (strain ATCC 15546 / NRRL 13137 / CBS 260.88 / M93).